The following is a 495-amino-acid chain: MADRNLRDLLAPWVAGLPARELREMTLDSRVAAAGDLFVAVVGHQADGRRYIPQAIAQGVAAIIAEAKDEATDGEIREMHGVPVVYLNQLNERLSALAGRFYHEPSENMRLVAVTGTNGKTTTTQLLAQWSQLLGETSAVMGTVGNGLLGKVIPTENTTGSAVDVQHVLASLVAQGATFGAMEVSSHGLVQHRVAALKFAASVFTNLSRDHLDYHGDMAHYEAAKWMLYSTHHHGQAIVNADDEVGRRWLASLPDAVAVSMEGHINPNCHGRWLKAEAVEYHDRGATIRFASSWGDGEIESRLMGAFNVSNLLLALATLLALGYPLTNLLKTAARLQPVCGRMEVFTAPGKPTVVVDYAHTPDALEKALQAARLHCAGKLWCVFGCGGDRDKGKRPLMGAIAEEFADIVVVTDDNPRTEEPRAIINDILAGMLDAGQVRVMEGRTEAVTNAIMQAKDNDVVLIAGKGHEDYQIVGTQRLDYSDRVTAARLLGVIA.

UDP-N-acetyl-alpha-D-muramoyl-L-alanyl-D-glutamate contacts are provided by residues Leu-27, Ser-29, and 44-46 (HQA). 116-122 (GTNGKTT) contacts ATP. Residues Asn-157, 158-159 (TT), Ser-185, Gln-191, and Arg-193 each bind UDP-N-acetyl-alpha-D-muramoyl-L-alanyl-D-glutamate. Lys-225 carries the post-translational modification N6-carboxylysine. Meso-2,6-diaminopimelate-binding positions include Arg-390, 414 to 417 (DNPR), Gly-465, and Glu-469. The Meso-diaminopimelate recognition motif signature appears at 414-417 (DNPR).

The protein belongs to the MurCDEF family. MurE subfamily. It depends on Mg(2+) as a cofactor. Carboxylation is probably crucial for Mg(2+) binding and, consequently, for the gamma-phosphate positioning of ATP.

It is found in the cytoplasm. It catalyses the reaction UDP-N-acetyl-alpha-D-muramoyl-L-alanyl-D-glutamate + meso-2,6-diaminopimelate + ATP = UDP-N-acetyl-alpha-D-muramoyl-L-alanyl-gamma-D-glutamyl-meso-2,6-diaminopimelate + ADP + phosphate + H(+). Its pathway is cell wall biogenesis; peptidoglycan biosynthesis. Its function is as follows. Catalyzes the addition of meso-diaminopimelic acid to the nucleotide precursor UDP-N-acetylmuramoyl-L-alanyl-D-glutamate (UMAG) in the biosynthesis of bacterial cell-wall peptidoglycan. The polypeptide is UDP-N-acetylmuramoyl-L-alanyl-D-glutamate--2,6-diaminopimelate ligase (Salmonella choleraesuis (strain SC-B67)).